Consider the following 925-residue polypeptide: Probable replication restart protein PriA (925 aa).

Residues cysteine 645, cysteine 648, cysteine 654, cysteine 657, cysteine 672, cysteine 675, cysteine 685, and cysteine 688 each contribute to the Zn(2+) site.

Belongs to the helicase family. PriA subfamily. Interacts with DnaB (DR_0549). Component of the replication restart primosome. Requires Zn(2+) as cofactor.

Functionally, initiates the restart of stalled replication forks, which reloads the replicative helicase on sites other than the origin of replication. Recognizes abandoned replication forks and remodels them to uncover a helicase loading site. Promotes assembly of the primosome at these replication forks. Recognizes and binds DNA at stalled replication forks, also binds single-stranded (ss)DNA. This Deinococcus radiodurans (strain ATCC 13939 / DSM 20539 / JCM 16871 / CCUG 27074 / LMG 4051 / NBRC 15346 / NCIMB 9279 / VKM B-1422 / R1) protein is Probable replication restart protein PriA.